The primary structure comprises 473 residues: Tyrosine phenol-lyase (473 aa).

The residue at position 257 (lysine 257) is an N6-(pyridoxal phosphate)lysine.

Belongs to the beta-eliminating lyase family. Homotetramer. Pyridoxal 5'-phosphate is required as a cofactor.

It catalyses the reaction L-tyrosine + H2O = phenol + pyruvate + NH4(+). The polypeptide is Tyrosine phenol-lyase (Intrasporangium calvum (strain ATCC 23552 / DSM 43043 / JCM 3097 / NBRC 12989 / NCIMB 10167 / NRRL B-3866 / 7 KIP)).